Reading from the N-terminus, the 661-residue chain is MNNFSIISEYKPAGDQPKAIDEIIAGLSSKKRSQILLGITGSGKTFTMANIIERTNRPTLIMAHNKTLAAQIYSEMKSIFPKNAVEYFVSYYDYYQPEAYIARTDTFIEKDSSINEQIDLMRHAATRSLLERRDVIVVSSVSCIYGLGSPDLYYQMMVNLEPGQSYPRDQLLNDLINLQYERNDIGFERGCFRVKGDNIDIFPSHYSNKAWRLSFFGNELEYIHEFDPLTGAKLAKLDKAMVFGNSHFVMPQETVNNAISGIEEELQKRLEFLKSQDKPLETQRLNQRTQYDLEMLTETGNCKGVENYSRFFTGRNAGEPPPTLFEYLPEDALLFVDESHVSVPQIRAMYNGDRARKEVLVEHGFRLPSALDNRPLKFEEWEKFRPQTVFVSATPGPFELEETGGTVVELIIRPTGLLDPECIIKPATNQIEDLISEIQTTIAKGFRVLVTTLTKKMAEDLTAYLQELKYKTSYLHSHVHTLERIEILRDLRQGTIDILVGINLLREGLDIPECGLVAILDADKEGFLRSEVSLIQTIGRAARNSEGRVILYADKMTKSIDKAVSETLRRRQIQQEYNAKHGIIPKTINRTIHALAEFEKIDSKLDKKQAHTLFDNPAKLKTHIDKLKKEMLKAASNLEFEQAAKLRDQLKTLEEAALELS.

The 158-residue stretch at 25–182 (AGLSSKKRSQ…NDLINLQYER (158 aa)) folds into the Helicase ATP-binding domain. 38–45 (GITGSGKT) is a binding site for ATP. A Beta-hairpin motif is present at residues 91-114 (YYDYYQPEAYIARTDTFIEKDSSI). Residues 430-592 (QIEDLISEIQ…IIPKTINRTI (163 aa)) enclose the Helicase C-terminal domain. Residues 621-656 (KTHIDKLKKEMLKAASNLEFEQAAKLRDQLKTLEEA) enclose the UVR domain.

It belongs to the UvrB family. As to quaternary structure, forms a heterotetramer with UvrA during the search for lesions. Interacts with UvrC in an incision complex.

It localises to the cytoplasm. Its function is as follows. The UvrABC repair system catalyzes the recognition and processing of DNA lesions. A damage recognition complex composed of 2 UvrA and 2 UvrB subunits scans DNA for abnormalities. Upon binding of the UvrA(2)B(2) complex to a putative damaged site, the DNA wraps around one UvrB monomer. DNA wrap is dependent on ATP binding by UvrB and probably causes local melting of the DNA helix, facilitating insertion of UvrB beta-hairpin between the DNA strands. Then UvrB probes one DNA strand for the presence of a lesion. If a lesion is found the UvrA subunits dissociate and the UvrB-DNA preincision complex is formed. This complex is subsequently bound by UvrC and the second UvrB is released. If no lesion is found, the DNA wraps around the other UvrB subunit that will check the other stand for damage. The sequence is that of UvrABC system protein B from Rickettsia massiliae (strain Mtu5).